Reading from the N-terminus, the 474-residue chain is E3 ubiquitin-protein ligase RNF14 (474 aa).

The RWD domain occupies 11–137 (DELLALASIY…QFLKEETLAY (127 aa)). The D-box signature appears at 37–45 (RIYLDLPQN). The TRIAD supradomain stretch occupies residues 216 to 457 (KLFLCSICFC…DPGSPCFNRL (242 aa)). The Zn(2+) site is built by cysteine 220, cysteine 223, cysteine 238, histidine 240, cysteine 243, cysteine 246, cysteine 265, cysteine 270, cysteine 309, cysteine 314, cysteine 329, cysteine 332, cysteine 337, cysteine 340, and histidine 345. The RING-type 1 zinc-finger motif lies at 220 to 270 (CSICFCEKLGSECMYFLECRHVYCKACLKDYFEIQIRDGQVQCLNCPEPKC). The segment at 289–350 (ARYDRLLLQS…RLTYHGVSPC (62 aa)) adopts an IBR-type zinc-finger fold. Position 348 is a phosphoserine (serine 348). Residue cysteine 350 coordinates Zn(2+). Positions 351-395 (KVTAEKLMDLRNEYLQADEANKRLLDQRYGKRVIQKALEEMESKE) form a coiled coil. The interval 361–474 (RNEYLQADEA…DDIWEDEVED (114 aa)) is interaction with androgen receptor. Zn(2+) contacts are provided by cysteine 404 and cysteine 407. The RING-type 2; atypical zinc finger occupies 404–433 (CPCCGTPIEKLDGCNKMTCTGCMQYFCWIC). Cysteine 417 is an active-site residue. Residues cysteine 422, cysteine 425, cysteine 430, cysteine 433, histidine 445, and cysteine 453 each contribute to the Zn(2+) site.

This sequence belongs to the RBR family. RNF14 subfamily. As to quaternary structure, interacts with GCN1; interaction takes place in response to ribosome collisions and is required for ubiquitination of EEF1A1/eEF1A. Interacts with the ubiquitin-conjugating enzymes UBE2E1 and UBE2E2. Interacts with AR/androgen receptor. Interacts with TCF7/TCF1, TCF7L1/TCF3 and TCF7L2/TCF4; promoting Wnt signaling. RING-type zinc finger-dependent and UBE2E2-dependent autoubiquitination. Widely expressed.

Its subcellular location is the cytoplasm. The protein localises to the nucleus. It catalyses the reaction [E2 ubiquitin-conjugating enzyme]-S-ubiquitinyl-L-cysteine + [acceptor protein]-L-lysine = [E2 ubiquitin-conjugating enzyme]-L-cysteine + [acceptor protein]-N(6)-ubiquitinyl-L-lysine.. Its pathway is protein modification; protein ubiquitination. Functionally, E3 ubiquitin-protein ligase that plays a key role in the RNF14-RNF25 translation quality control pathway, a pathway that takes place when a ribosome has stalled during translation, and which promotes ubiquitination and degradation of translation factors on stalled ribosomes. Recruited to stalled ribosomes by the ribosome collision sensor GCN1 and mediates 'Lys-6'-linked ubiquitination of target proteins, leading to their degradation. Mediates ubiquitination of EEF1A1/eEF1A and ETF1/eRF1 translation factors on stalled ribosomes, leading to their degradation. Also catalyzes ubiquitination of ribosomal proteins RPL0, RPL1, RPL12, RPS13 and RPS17. Specifically required to resolve RNA-protein cross-links caused by reactive aldehydes, which trigger translation stress by stalling ribosomes: acts by catalying 'Lys-6'-linked ubiquitination of RNA-protein cross-links, leading to their removal by the ATP-dependent unfoldase VCP and subsequent degradation by the proteasome. Independently of its function in the response to stalled ribosomes, acts as a regulator of transcription in Wnt signaling via its interaction with TCF transcription factors (TCF7/TCF1, TCF7L1/TCF3 and TCF7L2/TCF4). May also play a role as a coactivator for androgen- and, to a lesser extent, progesterone-dependent transcription. In Homo sapiens (Human), this protein is E3 ubiquitin-protein ligase RNF14.